Consider the following 567-residue polypeptide: Putative laccase-17 (567 aa).

A signal peptide spans 1–22 (MPSRGCSCWLLSLALLCSLAAA). Plastocyanin-like domains follow at residues 30 to 146 (VIRE…PRDG) and 158 to 310 (ELAP…YGAA). The N-linked (GlcNAc...) asparagine glycan is linked to asparagine 76. Histidine 80, histidine 82, histidine 125, and histidine 127 together coordinate Cu cation. N-linked (GlcNAc...) asparagine glycosylation is found at asparagine 187, asparagine 241, asparagine 298, asparagine 312, asparagine 327, asparagine 365, asparagine 368, asparagine 378, asparagine 388, and asparagine 430. The 137-residue stretch at 415-551 (DFPANPPVQF…AMAFLVDDGV (137 aa)) folds into the Plastocyanin-like 3 domain. 7 residues coordinate Cu cation: histidine 468, histidine 471, histidine 473, histidine 530, cysteine 531, histidine 532, and histidine 536.

The protein belongs to the multicopper oxidase family. It depends on Cu cation as a cofactor.

It localises to the secreted. Its subcellular location is the extracellular space. The protein resides in the apoplast. It catalyses the reaction 4 hydroquinone + O2 = 4 benzosemiquinone + 2 H2O. In terms of biological role, lignin degradation and detoxification of lignin-derived products. The chain is Putative laccase-17 (LAC17) from Oryza sativa subsp. japonica (Rice).